The following is a 303-amino-acid chain: Aspartate carbamoyltransferase catalytic subunit (303 aa).

2 residues coordinate carbamoyl phosphate: R54 and T55. Residue K83 participates in L-aspartate binding. Positions 104, 132, and 135 each coordinate carbamoyl phosphate. 2 residues coordinate L-aspartate: R164 and R226. Carbamoyl phosphate-binding residues include L265 and P266.

This sequence belongs to the aspartate/ornithine carbamoyltransferase superfamily. ATCase family. Heterooligomer of catalytic and regulatory chains.

The catalysed reaction is carbamoyl phosphate + L-aspartate = N-carbamoyl-L-aspartate + phosphate + H(+). The protein operates within pyrimidine metabolism; UMP biosynthesis via de novo pathway; (S)-dihydroorotate from bicarbonate: step 2/3. Catalyzes the condensation of carbamoyl phosphate and aspartate to form carbamoyl aspartate and inorganic phosphate, the committed step in the de novo pyrimidine nucleotide biosynthesis pathway. This is Aspartate carbamoyltransferase catalytic subunit from Methanocorpusculum labreanum (strain ATCC 43576 / DSM 4855 / Z).